The primary structure comprises 432 residues: Adenylosuccinate synthetase (432 aa).

Residues 13 to 19 (GDEGKGK) and 41 to 43 (GHT) contribute to the GTP site. Asp-14 functions as the Proton acceptor in the catalytic mechanism. Mg(2+)-binding residues include Asp-14 and Gly-41. IMP contacts are provided by residues 14–17 (DEGK), 39–42 (NAGH), Thr-130, Arg-144, Gln-225, Thr-240, and Arg-304. His-42 acts as the Proton donor in catalysis. Residue 300–306 (ATTGRKR) participates in substrate binding. GTP contacts are provided by residues Arg-306, 332–334 (KLD), and 415–417 (STG).

The protein belongs to the adenylosuccinate synthetase family. Homodimer. It depends on Mg(2+) as a cofactor.

It localises to the cytoplasm. It catalyses the reaction IMP + L-aspartate + GTP = N(6)-(1,2-dicarboxyethyl)-AMP + GDP + phosphate + 2 H(+). Its pathway is purine metabolism; AMP biosynthesis via de novo pathway; AMP from IMP: step 1/2. In terms of biological role, plays an important role in the de novo pathway of purine nucleotide biosynthesis. Catalyzes the first committed step in the biosynthesis of AMP from IMP. This chain is Adenylosuccinate synthetase, found in Tolumonas auensis (strain DSM 9187 / NBRC 110442 / TA 4).